A 22-amino-acid polypeptide reads, in one-letter code: thr operon leader peptide (22 aa).

This sequence belongs to the thr operon leader peptide family.

Its function is as follows. This protein is involved in control of the biosynthesis of threonine. This is thr operon leader peptide from Klebsiella pneumoniae (strain 342).